A 405-amino-acid chain; its full sequence is Phosphoglycerate kinase (405 aa).

Substrate is bound by residues 21–23 (DFN), Arg36, 59–62 (HLGR), Arg119, and Arg161. ATP-binding positions include Lys212, Gly301, Glu332, and 361-364 (GGDS).

The protein belongs to the phosphoglycerate kinase family. In terms of assembly, monomer.

It localises to the cytoplasm. It carries out the reaction (2R)-3-phosphoglycerate + ATP = (2R)-3-phospho-glyceroyl phosphate + ADP. It functions in the pathway carbohydrate degradation; glycolysis; pyruvate from D-glyceraldehyde 3-phosphate: step 2/5. The chain is Phosphoglycerate kinase from Leuconostoc mesenteroides subsp. mesenteroides (strain ATCC 8293 / DSM 20343 / BCRC 11652 / CCM 1803 / JCM 6124 / NCDO 523 / NBRC 100496 / NCIMB 8023 / NCTC 12954 / NRRL B-1118 / 37Y).